A 346-amino-acid polypeptide reads, in one-letter code: Small ribosomal subunit biogenesis GTPase RsgA (346 aa).

The interval 1–26 (MAKRKLTQNQTRRIQSNNAKTLHRHK) is disordered. Residues 7–20 (TQNQTRRIQSNNAK) show a composition bias toward polar residues. The CP-type G domain maps to 103-271 (ENEISRPDYY…LIDSPGIREF (169 aa)). GTP contacts are provided by residues 159–162 (NKVD) and 213–221 (GQSGVGKSS). C295, C300, H302, and C308 together coordinate Zn(2+).

This sequence belongs to the TRAFAC class YlqF/YawG GTPase family. RsgA subfamily. Monomer. Associates with 30S ribosomal subunit, binds 16S rRNA. It depends on Zn(2+) as a cofactor.

It is found in the cytoplasm. One of several proteins that assist in the late maturation steps of the functional core of the 30S ribosomal subunit. Helps release RbfA from mature subunits. May play a role in the assembly of ribosomal proteins into the subunit. Circularly permuted GTPase that catalyzes slow GTP hydrolysis, GTPase activity is stimulated by the 30S ribosomal subunit. The sequence is that of Small ribosomal subunit biogenesis GTPase RsgA from Haemophilus influenzae (strain PittEE).